Here is a 149-residue protein sequence, read N- to C-terminus: Nucleoside diphosphate kinase (149 aa).

ATP-binding residues include Lys-9, Phe-57, Arg-85, Thr-91, Arg-102, and Asn-112. Residue His-115 is the Pros-phosphohistidine intermediate of the active site.

It belongs to the NDK family. In terms of assembly, homotetramer. Mg(2+) serves as cofactor.

The protein localises to the cytoplasm. It carries out the reaction a 2'-deoxyribonucleoside 5'-diphosphate + ATP = a 2'-deoxyribonucleoside 5'-triphosphate + ADP. The enzyme catalyses a ribonucleoside 5'-diphosphate + ATP = a ribonucleoside 5'-triphosphate + ADP. Functionally, major role in the synthesis of nucleoside triphosphates other than ATP. The ATP gamma phosphate is transferred to the NDP beta phosphate via a ping-pong mechanism, using a phosphorylated active-site intermediate. The chain is Nucleoside diphosphate kinase from Herpetosiphon aurantiacus (strain ATCC 23779 / DSM 785 / 114-95).